The chain runs to 218 residues: Ubiquitin-conjugating enzyme E2-24 kDa (218 aa).

The 146-residue stretch at 3–148 folds into the UBC core domain; sequence SSKRRIETDV…IKEYIDKYAT (146 aa). Residue Cys-85 is the Glycyl thioester intermediate of the active site. Residues 154–218 are disordered; the sequence is QMFGGDNDSD…DDDYDEVANQ (65 aa). Acidic residues-rich tracts occupy residues 160–183 and 192–218; these read NDSDDSDSGGDLQEEDSDSDEDMD and DSVDELSEDLSDIDVSDDDDYDEVANQ.

This sequence belongs to the ubiquitin-conjugating enzyme family.

It is found in the cytoplasm. The enzyme catalyses S-ubiquitinyl-[E1 ubiquitin-activating enzyme]-L-cysteine + [E2 ubiquitin-conjugating enzyme]-L-cysteine = [E1 ubiquitin-activating enzyme]-L-cysteine + S-ubiquitinyl-[E2 ubiquitin-conjugating enzyme]-L-cysteine.. It functions in the pathway protein modification; protein ubiquitination. In terms of biological role, catalyzes the covalent attachment of ubiquitin to other proteins. Required for the adaptation to the presence of glucose in the growth medium; mediates the degradation of enzymes involved in gluconeogenesis when cells are shifted to glucose-containing medium. Required for proteasome-dependent catabolite degradation of fructose-1,6-bisphosphatase (FBP1). The sequence is that of Ubiquitin-conjugating enzyme E2-24 kDa (UBC8) from Saccharomyces cerevisiae (strain ATCC 204508 / S288c) (Baker's yeast).